A 474-amino-acid polypeptide reads, in one-letter code: Gamma-aminobutyric acid receptor subunit gamma-2 (474 aa).

The first 38 residues, 1–38 (MSSPNTWSIGSSVYSPVFSQKMTLWILLLLSLYPGFTS), serve as a signal peptide directing secretion. Residues 39–274 (QKSDDDYEDY…FDLSRRMGYF (236 aa)) lie on the Extracellular side of the membrane. 2 N-linked (GlcNAc...) asparagine glycosylation sites follow: Asn51 and Asn128. Cysteines 189 and 203 form a disulfide. An N-linked (GlcNAc...) asparagine glycan is attached at Asn246. The helical transmembrane segment at 275-295 (TIQTYIPCTLIVVLSWVSFWI) threads the bilayer. Over 296–301 (NKDAVP) the chain is Cytoplasmic. The helical transmembrane segment at 302-321 (ARTSLGITTVLTMTTLSTIA) threads the bilayer. At 322–333 (RKSLPKVSYVTA) the chain is on the extracellular side. Residues 334 to 358 (MDLFVSVCFIFVFSALVEYGTLHYF) form a helical membrane-spanning segment. Over 359–450 (VSNRKPSKDK…IHIRIAKMDS (92 aa)) the chain is Cytoplasmic. Ser381 carries the post-translational modification Phosphoserine; by PKC. Residues 451-472 (YARIFFPTAFCLFNLVYWVSYL) traverse the membrane as a helical segment. Residues 473–474 (YL) lie on the Extracellular side of the membrane.

It belongs to the ligand-gated ion channel (TC 1.A.9) family. Gamma-aminobutyric acid receptor (TC 1.A.9.5) subfamily. GABRG2 sub-subfamily. As to quaternary structure, heteropentamer, formed by a combination of alpha (GABRA1-6), beta (GABRB1-3), gamma (GABRG1-3), delta (GABRD), epsilon (GABRE), rho (GABRR1-3), pi (GABRP) and theta (GABRQ) chains, each subunit exhibiting distinct physiological and pharmacological properties. Interacts with GABARAP. Interacts with KIF21B. Identified in a complex of 720 kDa composed of LHFPL4, NLGN2, GABRA1, GABRB2, GABRG2 and GABRB3. Interacts with LHFPL4. Interacts with SHISA7; interaction leads to the regulation of GABA(A) receptor trafficking, channel deactivation kinetics and pharmacology. Glycosylated. Post-translationally, palmitoylated by ZDHHC3/GODZ; required for the accumulation of GABA(A) receptors at the postsynaptic membrane of inhibitory GABAergic synapses. As to expression, expressed in brain neurons (at protein level).

The protein localises to the postsynaptic cell membrane. It localises to the cell membrane. The protein resides in the cell projection. It is found in the dendrite. Its subcellular location is the cytoplasmic vesicle membrane. It catalyses the reaction chloride(in) = chloride(out). Its activity is regulated as follows. Allosterically activated by benzodiazepines. Activated by pentobarbital. Inhibited by the antagonist bicuculline. Inhibited by zinc ions. Potentiated by histamine. Functionally, gamma subunit of the heteropentameric ligand-gated chloride channel gated by gamma-aminobutyric acid (GABA), a major inhibitory neurotransmitter in the brain. GABA-gated chloride channels, also named GABA(A) receptors (GABAAR), consist of five subunits arranged around a central pore and contain GABA active binding site(s) located at the alpha and beta subunit interface(s). When activated by GABA, GABAARs selectively allow the flow of chloride anions across the cell membrane down their electrochemical gradient. Gamma-2/GABRG2-containing GABAARs are found at both synaptic and extrasynaptic sites. Chloride influx into the postsynaptic neuron following GABAAR opening decreases the neuron ability to generate a new action potential, thereby reducing nerve transmission. GABAARs containing alpha-1 and beta-2 or -3 subunits exhibit synaptogenic activity; the gamma-2 subunit being necessary but not sufficient to induce rapid synaptic contacts formation. Extrasynaptic gamma-2-containing receptors contribute to the tonic GABAergic inhibition. GABAARs function also as histamine receptor where histamine binds at the interface of two neighboring beta subunits and potentiates GABA response in a gamma-2 subunit-controlled manner. This chain is Gamma-aminobutyric acid receptor subunit gamma-2, found in Mus musculus (Mouse).